A 219-amino-acid polypeptide reads, in one-letter code: MSLGLVGRKVGMTRIFTAEGDSIPVTVLDVSDNRVTQIKTVETDGYTAVQVAFGTRRASRVTKPLAGHLAKAGVQAGEILKEFQIDAAKAAELSSGAVIGVDLFEVGQKVDVQGTSIGKGYAGTIKRYNFSSGRASHGNSRSHNVPGSIGMAQDPGRVFPGKRMTGHMGDETVTVQNLEIARIDADRKLLLVKGAVPGAKGGKVFVTPAVKTRAVKGAK.

Residues 133-145 (GRASHGNSRSHNV) show a composition bias toward polar residues. Positions 133–153 (GRASHGNSRSHNVPGSIGMAQ) are disordered. Glutamine 153 is subject to N5-methylglutamine.

Belongs to the universal ribosomal protein uL3 family. In terms of assembly, part of the 50S ribosomal subunit. Forms a cluster with proteins L14 and L19. In terms of processing, methylated by PrmB.

Its function is as follows. One of the primary rRNA binding proteins, it binds directly near the 3'-end of the 23S rRNA, where it nucleates assembly of the 50S subunit. This Paraburkholderia phymatum (strain DSM 17167 / CIP 108236 / LMG 21445 / STM815) (Burkholderia phymatum) protein is Large ribosomal subunit protein uL3.